Consider the following 477-residue polypeptide: MTNPFLNLTYEPALESLGNEFFDPVSAATFPEHKLRFRNDRLLPMLGLEPSQVKDDNFVEAFGLFHGVRPFLALRYHGYQFGEYNPNLGDGRGFLYGQVRGVNGELFDFGTKGSGQTPYSRGGDGRLTLKGGVREVLAAEALHRLGVKTSRCLSLVETGDSLWRGDEPSPTRASVMIRFSRSHIRFGTFERLHYHHQTEQIAQLLDHVIVTYYPEVSGSNSDDSAHIAFFRVLVERVAKLVAQWMAAGFCHGVLNTDNMSITGESFDYGPYGFVPTYDLNFIAAYFDYGGRYRFGNQPAVCRWNLERLQVSLSSVIPSKAMTEALEDYEKIYLGYYITLIARRLGISSTLGDRLDPELWEKLVGQTLQCLAQSQWSYPDFFAQLRLNFSPSWRDNADLILENVDLLGADWSTWRSIYQQVLKQLPPESLAAVPTVLEQANPLTDLLRPRIETVWQAIAEDDNWQPFNDLVQKLQSGN.

ATP is bound by residues G89, G91, R92, K112, D124, G125, R178, and R185. Catalysis depends on D257, which acts as the Proton acceptor. The Mg(2+) site is built by N258 and D267. Position 267 (D267) interacts with ATP.

This sequence belongs to the SELO family. Mg(2+) is required as a cofactor. It depends on Mn(2+) as a cofactor.

The enzyme catalyses L-seryl-[protein] + ATP = 3-O-(5'-adenylyl)-L-seryl-[protein] + diphosphate. It catalyses the reaction L-threonyl-[protein] + ATP = 3-O-(5'-adenylyl)-L-threonyl-[protein] + diphosphate. It carries out the reaction L-tyrosyl-[protein] + ATP = O-(5'-adenylyl)-L-tyrosyl-[protein] + diphosphate. The catalysed reaction is L-histidyl-[protein] + UTP = N(tele)-(5'-uridylyl)-L-histidyl-[protein] + diphosphate. The enzyme catalyses L-seryl-[protein] + UTP = O-(5'-uridylyl)-L-seryl-[protein] + diphosphate. It catalyses the reaction L-tyrosyl-[protein] + UTP = O-(5'-uridylyl)-L-tyrosyl-[protein] + diphosphate. Functionally, nucleotidyltransferase involved in the post-translational modification of proteins. It can catalyze the addition of adenosine monophosphate (AMP) or uridine monophosphate (UMP) to a protein, resulting in modifications known as AMPylation and UMPylation. This chain is Protein nucleotidyltransferase YdiU, found in Synechocystis sp. (strain ATCC 27184 / PCC 6803 / Kazusa).